The primary structure comprises 719 residues: Anaphase-promoting complex subunit 4 (719 aa).

Residues 57–96 (NSQRIWDVDFHDLEATELCWNHDGNLIVVGFKNGELKIID) form a WD repeat.

As to quaternary structure, the APC/C is composed of at least 13 subunits: apc1, apc2, nuc2, apc4, apc5, cut9, apc8, apc10, apc11, hcn1, apc13, apc14 and apc15. Interacts with apc1 and dim1.

In terms of biological role, component of the anaphase-promoting complex/cyclosome (APC/C), a cell cycle-regulated E3 ubiquitin-protein ligase complex that controls progression through mitosis and the G1 phase of the cell cycle. The APC/C is thought to confer substrate specificity and, in the presence of ubiquitin-conjugating E2 enzymes, it catalyzes the formation of protein-ubiquitin conjugates that are subsequently degraded by the 26S proteasome. Has a role in promoting metaphase to anaphase transition via the ubiquitination of specific mitotic substrates. This Schizosaccharomyces pombe (strain 972 / ATCC 24843) (Fission yeast) protein is Anaphase-promoting complex subunit 4 (cut20).